The primary structure comprises 282 residues: Large ribosomal subunit protein uL2 (282 aa).

Disordered regions lie at residues 26-55 and 218-266; these read KKSP…RHRG and PHVR…HNKS. Residues 34-43 are compositionally biased toward polar residues; that stretch reads LESQSHTAGR. Residues 254 to 266 show a composition bias toward basic residues; the sequence is TIGKKTRNKHNKS.

The protein belongs to the universal ribosomal protein uL2 family. Part of the 50S ribosomal subunit. Forms a bridge to the 30S subunit in the 70S ribosome.

One of the primary rRNA binding proteins. Required for association of the 30S and 50S subunits to form the 70S ribosome, for tRNA binding and peptide bond formation. It has been suggested to have peptidyltransferase activity; this is somewhat controversial. Makes several contacts with the 16S rRNA in the 70S ribosome. The sequence is that of Large ribosomal subunit protein uL2 from Pediococcus pentosaceus (strain ATCC 25745 / CCUG 21536 / LMG 10740 / 183-1w).